The sequence spans 128 residues: Large ribosomal subunit protein bL12 (128 aa).

Belongs to the bacterial ribosomal protein bL12 family. In terms of assembly, homodimer. Part of the ribosomal stalk of the 50S ribosomal subunit. Forms a multimeric L10(L12)X complex, where L10 forms an elongated spine to which 2 to 4 L12 dimers bind in a sequential fashion. Binds GTP-bound translation factors.

In terms of biological role, forms part of the ribosomal stalk which helps the ribosome interact with GTP-bound translation factors. Is thus essential for accurate translation. This is Large ribosomal subunit protein bL12 from Halorhodospira halophila (strain DSM 244 / SL1) (Ectothiorhodospira halophila (strain DSM 244 / SL1)).